Reading from the N-terminus, the 552-residue chain is WAP, Kazal, immunoglobulin, Kunitz and NTR domain-containing protein 1 (552 aa).

An N-terminal signal peptide occupies residues 1-25 (MPAPQPLLPLLFAFVLIHLTSETNL). The WAP domain occupies 29-82 (PGSHPGMCPNQLSPHLWVDAQSTCERECTRDQDCAASEKCCTNVCGLQSCVAAR). 17 cysteine pairs are disulfide-bonded: C36-C69, C52-C73, C56-C68, C62-C78, C120-C150, C124-C143, C132-C161, C211-C267, C303-C355, C310-C338, C330-C351, C363-C413, C372-C396, C388-C409, C421-C493, C424-C495, and C435-C544. Positions 112 to 163 (WDGQPVCRCRDRCEKEPSFTCASDGLTYYNRCYMDAEACLRGLHLHVVPCKH) constitute a Kazal-like domain. Positions 190-283 (PALYNSPSPQ…GLLRADFPLS (94 aa)) constitute an Ig-like C2-type domain. BPTI/Kunitz inhibitor domains follow at residues 289 to 355 (TTQD…QQAC) and 363 to 413 (CALP…EDAC). The NTR domain maps to 413–544 (CPVPRTPPCR…IVELLEKKAC (132 aa)). N497 is a glycosylation site (N-linked (GlcNAc...) asparagine).

The protein belongs to the WFIKKN family. As to expression, preferentially expressed in the developing inner ear and the dorsal neural tube.

It localises to the secreted. Its function is as follows. Protease-inhibitor that contains multiple distinct protease inhibitor domains. Probably has serine protease- and metalloprotease-inhibitor activity. The protein is WAP, Kazal, immunoglobulin, Kunitz and NTR domain-containing protein 1 (Wfikkn1) of Rattus norvegicus (Rat).